A 301-amino-acid polypeptide reads, in one-letter code: Pyridoxal 5'-phosphate synthase subunit PdxS (301 aa).

A D-ribose 5-phosphate-binding site is contributed by D31. K88 (schiff-base intermediate with D-ribose 5-phosphate) is an active-site residue. A D-ribose 5-phosphate-binding site is contributed by G160. R172 is a D-glyceraldehyde 3-phosphate binding site. D-ribose 5-phosphate-binding positions include G221 and 242-243; that span reads GS. Residues 273-301 are disordered; that stretch reads EIAKSPGKGMKGQANETLPEEEKLQDRGI. Positions 292 to 301 are enriched in basic and acidic residues; sequence EEEKLQDRGI.

This sequence belongs to the PdxS/SNZ family. As to quaternary structure, in the presence of PdxT, forms a dodecamer of heterodimers.

The catalysed reaction is aldehydo-D-ribose 5-phosphate + D-glyceraldehyde 3-phosphate + L-glutamine = pyridoxal 5'-phosphate + L-glutamate + phosphate + 3 H2O + H(+). It functions in the pathway cofactor biosynthesis; pyridoxal 5'-phosphate biosynthesis. Catalyzes the formation of pyridoxal 5'-phosphate from ribose 5-phosphate (RBP), glyceraldehyde 3-phosphate (G3P) and ammonia. The ammonia is provided by the PdxT subunit. Can also use ribulose 5-phosphate and dihydroxyacetone phosphate as substrates, resulting from enzyme-catalyzed isomerization of RBP and G3P, respectively. This Natronomonas pharaonis (strain ATCC 35678 / DSM 2160 / CIP 103997 / JCM 8858 / NBRC 14720 / NCIMB 2260 / Gabara) (Halobacterium pharaonis) protein is Pyridoxal 5'-phosphate synthase subunit PdxS.